Reading from the N-terminus, the 65-residue chain is Small ribosomal subunit protein bS21 (65 aa).

It belongs to the bacterial ribosomal protein bS21 family.

This Geotalea daltonii (strain DSM 22248 / JCM 15807 / FRC-32) (Geobacter daltonii) protein is Small ribosomal subunit protein bS21.